The sequence spans 872 residues: DNA mismatch repair protein MutS (872 aa).

626–633 (GPNMAGKS) is a binding site for ATP.

Belongs to the DNA mismatch repair MutS family.

Functionally, this protein is involved in the repair of mismatches in DNA. It is possible that it carries out the mismatch recognition step. This protein has a weak ATPase activity. This is DNA mismatch repair protein MutS from Chlorobium phaeobacteroides (strain DSM 266 / SMG 266 / 2430).